The primary structure comprises 139 residues: MADMSLTIITPERTVLRDAPADAVVVPVVDGSMGILKNHAPMVANLRIGVLRYKQDGVYKRVAVTGGFVEVSENRITVLADAAELAESIDVMRAMEAKRRAEARLRDRKANIDRTRAEAALRRAMVRLRAAGALDHDKD.

It belongs to the ATPase epsilon chain family. As to quaternary structure, F-type ATPases have 2 components, CF(1) - the catalytic core - and CF(0) - the membrane proton channel. CF(1) has five subunits: alpha(3), beta(3), gamma(1), delta(1), epsilon(1). CF(0) has three main subunits: a, b and c.

It is found in the cell membrane. Produces ATP from ADP in the presence of a proton gradient across the membrane. The polypeptide is ATP synthase epsilon chain (Symbiobacterium thermophilum (strain DSM 24528 / JCM 14929 / IAM 14863 / T)).